The sequence spans 131 residues: Histone H2A.2 (131 aa).

Residues 1–22 (MSGGKGKAGSSEKASTSRSAKA) form a disordered region. Ser-2 is subject to N-acetylserine. N6-acetyllysine is present on residues Lys-5 and Lys-7. Gln-105 bears the N5-methylglutamine mark. Position 128 is a phosphoserine (Ser-128). Residues 128-129 (SQ) carry the [ST]-Q motif motif.

Belongs to the histone H2A family. As to quaternary structure, the nucleosome is a histone octamer containing two molecules each of H2A, H2B, H3 and H4 assembled in one H3-H4 heterotetramer and two H2A-H2B heterodimers. The octamer wraps approximately 147 bp of DNA. Post-translationally, phosphorylated to form H2AS128ph (gamma-H2A) in response to DNA double-strand breaks (DSBs) generated by exogenous genotoxic agents and by stalled replication forks. Phosphorylation is dependent on the DNA damage checkpoint kinases MEC1/ATR and TEL1/ATM, spreads on either side of a detected DSB site and may mark the surrounding chromatin for recruitment of proteins required for DNA damage signaling and repair. Gamma-H2A is removed from the DNA prior to the strand invasion-primer extension step of the repair process and subsequently dephosphorylated. Dephosphorylation is necessary for efficient recovery from the DNA damage checkpoint. Acetylated by ESA1 to form H2AK4ac and H2AK7ac.

It is found in the nucleus. The protein localises to the chromosome. Its function is as follows. Core component of nucleosome which plays a central role in DNA double strand break (DSB) repair. Nucleosomes wrap and compact DNA into chromatin, limiting DNA accessibility to the cellular machineries which require DNA as a template. Histones thereby play a central role in transcription regulation, DNA repair, DNA replication and chromosomal stability. DNA accessibility is regulated via a complex set of post-translational modifications of histones, also called histone code, and nucleosome remodeling. The protein is Histone H2A.2 (HTA2) of Candida albicans (strain SC5314 / ATCC MYA-2876) (Yeast).